Reading from the N-terminus, the 549-residue chain is Chaperonin GroEL (549 aa).

ATP contacts are provided by residues 29-32, Lys50, 86-90, Gly413, 479-481, and Asp496; these read TLGP, DGTTT, and NAA. The tract at residues 522 to 549 is disordered; the sequence is VSDKPEKPQQGGQGGGGMGGGDMGGMDF. Over residues 532–549 the composition is skewed to gly residues; that stretch reads GGQGGGGMGGGDMGGMDF.

It belongs to the chaperonin (HSP60) family. As to quaternary structure, forms a cylinder of 14 subunits composed of two heptameric rings stacked back-to-back. Interacts with the co-chaperonin GroES.

It is found in the cytoplasm. It catalyses the reaction ATP + H2O + a folded polypeptide = ADP + phosphate + an unfolded polypeptide.. Its function is as follows. Together with its co-chaperonin GroES, plays an essential role in assisting protein folding. The GroEL-GroES system forms a nano-cage that allows encapsulation of the non-native substrate proteins and provides a physical environment optimized to promote and accelerate protein folding. In Deinococcus deserti (strain DSM 17065 / CIP 109153 / LMG 22923 / VCD115), this protein is Chaperonin GroEL.